We begin with the raw amino-acid sequence, 169 residues long: Transcription antitermination protein NusB (169 aa).

This sequence belongs to the NusB family.

Functionally, involved in transcription antitermination. Required for transcription of ribosomal RNA (rRNA) genes. Binds specifically to the boxA antiterminator sequence of the ribosomal RNA (rrn) operons. This is Transcription antitermination protein NusB from Deinococcus geothermalis (strain DSM 11300 / CIP 105573 / AG-3a).